We begin with the raw amino-acid sequence, 437 residues long: Doublesex- and mab-3-related transcription factor A2 (437 aa).

The segment at residues cysteine 49–arginine 96 is a DNA-binding region (DM). A disordered region spans residues isoleucine 160 to glutamine 253. Low complexity-rich tracts occupy residues serine 179–glutamate 201 and serine 223–glycine 235. The DMA domain occupies arginine 254–glutamine 289.

Belongs to the DMRT family.

It is found in the nucleus. Its function is as follows. May be involved in sexual development. The chain is Doublesex- and mab-3-related transcription factor A2 (dmrta2) from Xenopus laevis (African clawed frog).